Consider the following 463-residue polypeptide: L-seryl-tRNA(Sec) selenium transferase (463 aa).

K295 bears the N6-(pyridoxal phosphate)lysine mark.

This sequence belongs to the SelA family. As to quaternary structure, homodecamer; pentamer of dimers. Binds only one seryl-tRNA(Sec) per dimer. It depends on pyridoxal 5'-phosphate as a cofactor.

It is found in the cytoplasm. It carries out the reaction L-seryl-tRNA(Sec) + selenophosphate + H(+) = L-selenocysteinyl-tRNA(Sec) + phosphate. It participates in aminoacyl-tRNA biosynthesis; selenocysteinyl-tRNA(Sec) biosynthesis; selenocysteinyl-tRNA(Sec) from L-seryl-tRNA(Sec) (bacterial route): step 1/1. Functionally, converts seryl-tRNA(Sec) to selenocysteinyl-tRNA(Sec) required for selenoprotein biosynthesis. In Escherichia coli (strain SMS-3-5 / SECEC), this protein is L-seryl-tRNA(Sec) selenium transferase.